The chain runs to 316 residues: 4-hydroxy-3-methylbut-2-enyl diphosphate reductase (316 aa).

Cysteine 12 is a binding site for [4Fe-4S] cluster. (2E)-4-hydroxy-3-methylbut-2-enyl diphosphate-binding residues include histidine 43 and histidine 81. The dimethylallyl diphosphate site is built by histidine 43 and histidine 81. Residues histidine 43 and histidine 81 each coordinate isopentenyl diphosphate. Residue cysteine 103 participates in [4Fe-4S] cluster binding. A (2E)-4-hydroxy-3-methylbut-2-enyl diphosphate-binding site is contributed by histidine 131. Histidine 131 contributes to the dimethylallyl diphosphate binding site. Histidine 131 is an isopentenyl diphosphate binding site. The active-site Proton donor is glutamate 133. (2E)-4-hydroxy-3-methylbut-2-enyl diphosphate is bound at residue threonine 170. Cysteine 198 provides a ligand contact to [4Fe-4S] cluster. Residues serine 226, asparagine 228, and serine 271 each coordinate (2E)-4-hydroxy-3-methylbut-2-enyl diphosphate. Residues serine 226, asparagine 228, and serine 271 each coordinate dimethylallyl diphosphate. The isopentenyl diphosphate site is built by serine 226, asparagine 228, and serine 271.

The protein belongs to the IspH family. [4Fe-4S] cluster is required as a cofactor.

The enzyme catalyses isopentenyl diphosphate + 2 oxidized [2Fe-2S]-[ferredoxin] + H2O = (2E)-4-hydroxy-3-methylbut-2-enyl diphosphate + 2 reduced [2Fe-2S]-[ferredoxin] + 2 H(+). It carries out the reaction dimethylallyl diphosphate + 2 oxidized [2Fe-2S]-[ferredoxin] + H2O = (2E)-4-hydroxy-3-methylbut-2-enyl diphosphate + 2 reduced [2Fe-2S]-[ferredoxin] + 2 H(+). It functions in the pathway isoprenoid biosynthesis; dimethylallyl diphosphate biosynthesis; dimethylallyl diphosphate from (2E)-4-hydroxy-3-methylbutenyl diphosphate: step 1/1. The protein operates within isoprenoid biosynthesis; isopentenyl diphosphate biosynthesis via DXP pathway; isopentenyl diphosphate from 1-deoxy-D-xylulose 5-phosphate: step 6/6. Its function is as follows. Catalyzes the conversion of 1-hydroxy-2-methyl-2-(E)-butenyl 4-diphosphate (HMBPP) into a mixture of isopentenyl diphosphate (IPP) and dimethylallyl diphosphate (DMAPP). Acts in the terminal step of the DOXP/MEP pathway for isoprenoid precursor biosynthesis. In Geobacillus thermodenitrificans (strain NG80-2), this protein is 4-hydroxy-3-methylbut-2-enyl diphosphate reductase.